The chain runs to 102 residues: Large ribosomal subunit protein bL21 (102 aa).

Belongs to the bacterial ribosomal protein bL21 family. As to quaternary structure, part of the 50S ribosomal subunit. Contacts protein L20.

Functionally, this protein binds to 23S rRNA in the presence of protein L20. The protein is Large ribosomal subunit protein bL21 of Ehrlichia canis (strain Jake).